We begin with the raw amino-acid sequence, 106 residues long: Small ribosomal subunit protein uS10 (106 aa).

Belongs to the universal ribosomal protein uS10 family. Part of the 30S ribosomal subunit.

Involved in the binding of tRNA to the ribosomes. The polypeptide is Small ribosomal subunit protein uS10 (Synechococcus sp. (strain WH7803)).